We begin with the raw amino-acid sequence, 248 residues long: tRNA (guanine-N(1)-)-methyltransferase (248 aa).

S-adenosyl-L-methionine-binding positions include G113 and 133-138 (IGDYVL).

Belongs to the RNA methyltransferase TrmD family. Homodimer.

The protein localises to the cytoplasm. It catalyses the reaction guanosine(37) in tRNA + S-adenosyl-L-methionine = N(1)-methylguanosine(37) in tRNA + S-adenosyl-L-homocysteine + H(+). Specifically methylates guanosine-37 in various tRNAs. The sequence is that of tRNA (guanine-N(1)-)-methyltransferase from Shewanella halifaxensis (strain HAW-EB4).